Consider the following 237-residue polypeptide: Leucyl/phenylalanyl-tRNA--protein transferase (237 aa).

This sequence belongs to the L/F-transferase family.

Its subcellular location is the cytoplasm. The catalysed reaction is N-terminal L-lysyl-[protein] + L-leucyl-tRNA(Leu) = N-terminal L-leucyl-L-lysyl-[protein] + tRNA(Leu) + H(+). It carries out the reaction N-terminal L-arginyl-[protein] + L-leucyl-tRNA(Leu) = N-terminal L-leucyl-L-arginyl-[protein] + tRNA(Leu) + H(+). The enzyme catalyses L-phenylalanyl-tRNA(Phe) + an N-terminal L-alpha-aminoacyl-[protein] = an N-terminal L-phenylalanyl-L-alpha-aminoacyl-[protein] + tRNA(Phe). Functionally, functions in the N-end rule pathway of protein degradation where it conjugates Leu, Phe and, less efficiently, Met from aminoacyl-tRNAs to the N-termini of proteins containing an N-terminal arginine or lysine. In Shewanella baltica (strain OS185), this protein is Leucyl/phenylalanyl-tRNA--protein transferase.